The chain runs to 280 residues: Cycloeucalenol cycloisomerase (280 aa).

Transmembrane regions (helical) follow at residues 22-42 (LFFLFYTPFWLTLCLGIVVPY), 53-73 (YLLLALVSAVPAFVIPMLLVG), 89-109 (ANLWIIVFSYVGNYFWTHYFF), 167-187 (FEAAWILALSYFIAYLETIAI), 201-221 (MYRVGCLFYAIYFIVSFPMFF), and 244-264 (AMLVTIILDLWRLFLGPIVPL).

The protein localises to the membrane. The enzyme catalyses cycloeucalenol = obtusifoliol. Functionally, converts pentacyclic cyclopropyl sterols to tetracyclic sterols. The protein is Cycloeucalenol cycloisomerase (CPI1) of Arabidopsis thaliana (Mouse-ear cress).